The chain runs to 74 residues: WAP four-disulfide core domain protein 18 (74 aa).

An N-terminal signal peptide occupies residues 1-24 (MKTATVFVLVALIFMTMTTAWALS). Residues 26–73 (PKEKPGACPKPPPRSFGTCDERCTGDGSCSGNMKCCSNGCGHACKPPV) form the WAP domain.

It is found in the secreted. In terms of biological role, could have proteinase inhibiting capacity. The protein is WAP four-disulfide core domain protein 18 (WFDC18) of Bos taurus (Bovine).